The primary structure comprises 423 residues: Imidazolonepropionase (423 aa).

Positions 78 and 80 each coordinate Fe(3+). Positions 78 and 80 each coordinate Zn(2+). Residues R87, Y150, and H183 each contribute to the 4-imidazolone-5-propanoate site. An N-formimidoyl-L-glutamate-binding site is contributed by Y150. Fe(3+) is bound at residue H247. A Zn(2+)-binding site is contributed by H247. E250 serves as a coordination point for 4-imidazolone-5-propanoate. D322 lines the Fe(3+) pocket. D322 provides a ligand contact to Zn(2+). N-formimidoyl-L-glutamate-binding residues include N324 and G326. Position 327 (S327) interacts with 4-imidazolone-5-propanoate.

This sequence belongs to the metallo-dependent hydrolases superfamily. HutI family. Zn(2+) is required as a cofactor. The cofactor is Fe(3+).

It localises to the cytoplasm. The catalysed reaction is 4-imidazolone-5-propanoate + H2O = N-formimidoyl-L-glutamate. It functions in the pathway amino-acid degradation; L-histidine degradation into L-glutamate; N-formimidoyl-L-glutamate from L-histidine: step 3/3. Functionally, catalyzes the hydrolytic cleavage of the carbon-nitrogen bond in imidazolone-5-propanoate to yield N-formimidoyl-L-glutamate. It is the third step in the universal histidine degradation pathway. The chain is Imidazolonepropionase from Bacillus cereus (strain ATCC 10987 / NRS 248).